The primary structure comprises 704 residues: Ankyrin repeat and LEM domain-containing protein 1 homolog (704 aa).

Residues 1 to 29 (MPPNGAITTTPRSRMPPTTPSSGKSRPKK) are disordered. Positions 8–22 (TTTPRSRMPPTTPSS) are enriched in low complexity. 2 ANK repeats span residues 28–59 (KKET…NVNA) and 63–93 (DGAT…PMSA). 3 disordered regions span residues 247-293 (NEDV…SQET), 314-358 (NAGL…ANTT), and 381-421 (SKSA…TTVD). Positions 276–288 (RKQRTPVNHHKRS) are enriched in basic residues. Composition is skewed to low complexity over residues 329-346 (EPAI…TPKT) and 384-405 (AKSS…SFSS). The region spanning 425–470 (IRKIRRLREGELKSELKKFGISPAGPLDARTRRLYEKKLLIERRKI) is the LEM domain. A GIY-YIG domain is found at 525 to 635 (YNAFCYLIMD…AVKLKNLRNK (111 aa)).

Post-translationally, phosphorylated. Phosphorylated during telophase when localized at the midbody.

It is found in the cytoplasm. The protein localises to the nucleus. The protein resides in the chromosome. It localises to the midbody. Its subcellular location is the cytoskeleton. It is found in the spindle. With respect to regulation, inhibited by EDTA. In terms of biological role, endonuclease which, in association with baf-1, plays an essential role during embryogenesis in the DNA repair response following DNA damage probably by ensuring proper chromosome segregation. Also required during postembryonic cell divisions after DNA damage caused by ionizing radiation to ensure normal cell proliferation. Resolves chromatin bridges in late mitosis that result from incomplete DNA replication, defective chromosome condensation or unresolved recombination intermediates. Together with brc-1, contributes to genome integrity by resolving mitotic chromatin bridges that result from incomplete processing of DNA breaks. In parallel to the slx-1/mus-81 pathway, acts in processing early recombination intermediates in meiotic prophase I to prevent illegitimate recombination. Also involved in processing remaining, erroneous recombination intermediates that persist into the second meiotic division. This is Ankyrin repeat and LEM domain-containing protein 1 homolog from Caenorhabditis elegans.